A 225-amino-acid polypeptide reads, in one-letter code: ATP-dependent Clp protease proteolytic subunit (225 aa).

Residue Ser-123 is the Nucleophile of the active site. His-148 is an active-site residue.

This sequence belongs to the peptidase S14 family. In terms of assembly, fourteen ClpP subunits assemble into 2 heptameric rings which stack back to back to give a disk-like structure with a central cavity, resembling the structure of eukaryotic proteasomes.

The protein resides in the cytoplasm. It catalyses the reaction Hydrolysis of proteins to small peptides in the presence of ATP and magnesium. alpha-casein is the usual test substrate. In the absence of ATP, only oligopeptides shorter than five residues are hydrolyzed (such as succinyl-Leu-Tyr-|-NHMec, and Leu-Tyr-Leu-|-Tyr-Trp, in which cleavage of the -Tyr-|-Leu- and -Tyr-|-Trp bonds also occurs).. Its function is as follows. Cleaves peptides in various proteins in a process that requires ATP hydrolysis. Has a chymotrypsin-like activity. Plays a major role in the degradation of misfolded proteins. This is ATP-dependent Clp protease proteolytic subunit from Chlorobium chlorochromatii (strain CaD3).